The chain runs to 141 residues: Protein stum homolog (141 aa).

Residue Ser26 is modified to Phosphoserine. 2 helical membrane passes run 51 to 71 and 87 to 107; these read FPVA…GTFV and RHVC…ILTA.

Belongs to the SPEC3 family. Stum subfamily.

Its subcellular location is the membrane. This Homo sapiens (Human) protein is Protein stum homolog.